The primary structure comprises 495 residues: uncharacterized protein (495 aa).

Over residues 305–317 (DYNNNNNENYSGS) the composition is skewed to low complexity. A disordered region spans residues 305-404 (DYNNNNNENY…LDEEDNRKNK (100 aa)). Acidic residues predominate over residues 335 to 347 (YDNDENNDDENND). Low complexity predominate over residues 348 to 363 (ENNNNNNNNNNNNNNN). Residues 386–398 (SDDDEADNELDEE) are compositionally biased toward acidic residues.

This is an uncharacterized protein from Dictyostelium discoideum (Social amoeba).